We begin with the raw amino-acid sequence, 557 residues long: Formate--tetrahydrofolate ligase (557 aa).

Residue 65–72 (TPAGEGKT) coordinates ATP.

It belongs to the formate--tetrahydrofolate ligase family.

It carries out the reaction (6S)-5,6,7,8-tetrahydrofolate + formate + ATP = (6R)-10-formyltetrahydrofolate + ADP + phosphate. It functions in the pathway one-carbon metabolism; tetrahydrofolate interconversion. In Methylorubrum populi (strain ATCC BAA-705 / NCIMB 13946 / BJ001) (Methylobacterium populi), this protein is Formate--tetrahydrofolate ligase.